Consider the following 100-residue polypeptide: MRTPMLLALLALATLCLAGRADAKPGDAESGKGAAFVSKQEGSEVVKRLRRYLDHWLGAPAPYPDPLEPKREVCELNPDCDELADHIGFQEAYRRFYGPV.

The signal sequence occupies residues 1 to 23 (MRTPMLLALLALATLCLAGRADA). The propeptide occupies 24-51 (KPGDAESGKGAAFVSKQEGSEVVKRLRR). The 47-residue stretch at 52 to 98 (YLDHWLGAPAPYPDPLEPKREVCELNPDCDELADHIGFQEAYRRFYG) folds into the Gla domain. Position 60 is a 4-hydroxyproline (P60). Positions 68, 72, 75, and 81 each coordinate Ca(2+). 3 positions are modified to 4-carboxyglutamate: E68, E72, and E75. C74 and C80 are joined by a disulfide.

The protein belongs to the osteocalcin/matrix Gla protein family. Gamma-carboxyglutamate residues are formed by vitamin K dependent carboxylation by GGCX. These residues are essential for the binding of calcium. Decarboxylation promotes the hormone activity.

The protein localises to the secreted. Functionally, the carboxylated form is one of the main organic components of the bone matrix, which constitutes 1-2% of the total bone protein. It acts as a negative regulator of bone formation and is required to limit bone formation without impairing bone resorption or mineralization. The carboxylated form binds strongly to apatite and calcium. The uncarboxylated form acts as a hormone secreted by osteoblasts, which regulates different cellular processes, such as energy metabolism, male fertility and brain development. Regulates of energy metabolism by acting as a hormone favoring pancreatic beta-cell proliferation, insulin secretion and sensitivity and energy expenditure. Uncarboxylated osteocalcin hormone also promotes testosterone production in the testes: acts as a ligand for G protein-coupled receptor GPRC6A at the surface of Leydig cells, initiating a signaling response that promotes the expression of enzymes required for testosterone synthesis in a CREB-dependent manner. Also acts as a regulator of brain development: osteocalcin hormone crosses the blood-brain barrier and acts as a ligand for GPR158 on neurons, initiating a signaling response that prevents neuronal apoptosis in the hippocampus, favors the synthesis of all monoamine neurotransmitters and inhibits that of gamma-aminobutyric acid (GABA). Osteocalcin also crosses the placenta during pregnancy and maternal osteocalcin is required for fetal brain development. This chain is Osteocalcin (BGLAP), found in Bos taurus (Bovine).